The following is a 56-amino-acid chain: Ovomucoid (56 aa).

Positions 6–56 (VDCSDHPKPACLQEQKPLCGSDNKTYDNKCSFCNAVVDSNGTLTLSHFGKC) constitute a Kazal-like domain. Intrachain disulfides connect Cys8–Cys38, Cys16–Cys35, and Cys24–Cys56. Asn45 carries an N-linked (GlcNAc...) asparagine glycan.

It localises to the secreted. In Pipile pipile (Trinidad piping guan), this protein is Ovomucoid.